The sequence spans 289 residues: MADKHKHVDEVSGVETTGHEWDGIRELNNPLPRWWVYSFYATIIWAIGYAVAYPSWPMLTEATKGVLGYSSRAEVGVELAAAKAAQAGNLEQIALNSVEEIIANPQLQQFAVSAGASVFKVNCAQCHGSGAAGGQGFPNLNDDDWLWGGKPQEIYQTIAHGVRHATDGETRGSEMPPFGDMLTPEQMQQTAAYVMSLTQAPSQPHLVEQGKQVFADNCASCHGADAKGNREMGAPNLADAIWLYGEGEQAVIAQMKTPKHGVMPAWLPRLGDPVVKELAVFVHSLGGGE.

Residues 1–33 (MADKHKHVDEVSGVETTGHEWDGIRELNNPLPR) are Cytoplasmic-facing. Residues 34-56 (WWVYSFYATIIWAIGYAVAYPSW) traverse the membrane as a helical segment. Over 57–289 (PMLTEATKGV…VFVHSLGGGE (233 aa)) the chain is Periplasmic. Cytochrome c domains follow at residues 110 to 198 (FAVS…MSLT) and 205 to 286 (HLVE…HSLG). Cys-123, Cys-126, His-127, Met-175, Cys-218, Cys-221, His-222, and Met-263 together coordinate heme c.

The protein belongs to the CcoP / FixP family. Component of the cbb3-type cytochrome c oxidase at least composed of FixN, FixO, FixQ and FixP. The cofactor is heme c.

The protein resides in the cell inner membrane. It participates in energy metabolism; oxidative phosphorylation. Functionally, C-type cytochrome. Part of the cbb3-type cytochrome c oxidase complex. FixP subunit is required for transferring electrons from donor cytochrome c via its heme groups to FixO subunit. From there, electrons are shuttled to the catalytic binuclear center of FixN subunit where oxygen reduction takes place. The complex also functions as a proton pump. The sequence is that of Cbb3-type cytochrome c oxidase subunit FixP from Sinorhizobium medicae (strain WSM419) (Ensifer medicae).